A 563-amino-acid chain; its full sequence is Solute carrier family 22 member 1 (563 aa).

Residues 1-21 (MLTVDDVLEQVGEFGWFQKQT) lie on the Cytoplasmic side of the membrane. The chain crosses the membrane as a helical span at residues 22–42 (FLILCLLSAAFAPIYVGIVFL). Topologically, residues 43–144 (AFTPDHRCRS…LVCDDSWKVD (102 aa)) are extracellular. Asparagine 71 carries N-linked (GlcNAc...) asparagine glycosylation. The helical transmembrane segment at 145–165 (LFQSCVNLGFFLGSLGVGYIA) threads the bilayer. At 166–171 (DRFGRK) the chain is on the cytoplasmic side. The helical transmembrane segment at 172-192 (VCLLATTLTCASLGVLTAVAP) threads the bilayer. Residues 193-196 (DYTS) are Extracellular-facing. Residues 197 to 219 (LLIFRLLQGLVSKGSWTAGYTLI) form a helical membrane-spanning segment. The Cytoplasmic portion of the chain corresponds to 220–232 (TEFVGLGYRRTVA). A helical membrane pass occupies residues 233-253 (ILYQMAFTVGLVLLSGLAYIL). Residues 254–257 (PHWR) are Extracellular-facing. The helical transmembrane segment at 258–278 (WLQLAVSLPIFLLLFRFWFVP) threads the bilayer. Residues 278 to 282 (PESPR) carry the Proline-rich sequence motif. Residues 279-342 (ESPRWLLSQK…FRTPNLRKYT (64 aa)) are Cytoplasmic-facing. The residue at position 328 (serine 328) is a Phosphoserine. The chain crosses the membrane as a helical span at residues 343-363 (FILMYLWFTSSVVYQGLIMHV). The Extracellular segment spans residues 364-371 (GATGGNLY). A helical membrane pass occupies residues 372 to 392 (LDFLYSALVEFPAGFIILVTI). Residues 393–398 (DRFGRR) lie on the Cytoplasmic side of the membrane. Residues 399–418 (YPLATSNLAAGLACFLMIFI) traverse the membrane as a helical segment. The Extracellular portion of the chain corresponds to 419–423 (PHDLP). Residues 424–446 (WLNIMVACVGRMGITIVFQMVCL) traverse the membrane as a helical segment. The Cytoplasmic portion of the chain corresponds to 447–459 (VNAELFPTFIRNL). The helical transmembrane segment at 460–480 (GMMVCSSLCDLGGVLTPFLVF) threads the bilayer. Topologically, residues 481-487 (RLMEVWQ) are extracellular. Residues 488-508 (GSPLILFAALGLVAGGMTLLL) form a helical membrane-spanning segment. The Cytoplasmic portion of the chain corresponds to 509–563 (PETKGVTLPETIEDAENLQRKAKPKENKIYLQVQTSELNTQAAERDASQGTAQQK).

This sequence belongs to the major facilitator (TC 2.A.1) superfamily. Organic cation transporter (TC 2.A.1.19) family. Phosphorylated.

It is found in the basolateral cell membrane. The protein resides in the apical cell membrane. Its subcellular location is the lateral cell membrane. The protein localises to the basal cell membrane. It localises to the cell membrane. The catalysed reaction is 1-methylnicotinamide(out) = 1-methylnicotinamide(in). The enzyme catalyses dopamine(out) = dopamine(in). It catalyses the reaction serotonin(out) = serotonin(in). It carries out the reaction (R)-adrenaline(out) = (R)-adrenaline(in). The catalysed reaction is (R)-noradrenaline(out) = (R)-noradrenaline(in). The enzyme catalyses histamine(out) = histamine(in). It catalyses the reaction guanidine(out) = guanidine(in). It carries out the reaction choline(out) = choline(in). The catalysed reaction is acetylcholine(in) = acetylcholine(out). The enzyme catalyses thiamine(in) = thiamine(out). It catalyses the reaction spermidine(in) = spermidine(out). It carries out the reaction agmatine(out) = agmatine(in). The catalysed reaction is putrescine(out) = putrescine(in). The enzyme catalyses (R)-carnitine(in) = (R)-carnitine(out). It catalyses the reaction O-isobutanoyl-(R)-carnitine(in) = O-isobutanoyl-(R)-carnitine(out). It carries out the reaction O-acetyl-(R)-carnitine(in) = O-acetyl-(R)-carnitine(out). The catalysed reaction is O-3-hydroxybutanoyl-(R)-carnitine(in) = O-3-hydroxybutanoyl-(R)-carnitine(out). The enzyme catalyses O-propanoyl-(R)-carnitine(in) = O-propanoyl-(R)-carnitine(out). It catalyses the reaction O-butanoyl-(R)-carnitine(in) = O-butanoyl-(R)-carnitine(out). It carries out the reaction O-2-methylbutanoyl-(R)-carnitine(in) = O-2-methylbutanoyl-(R)-carnitine(out). The catalysed reaction is O-3-methylbutanoyl-(R)-carnitine(in) = O-3-methylbutanoyl-(R)-carnitine(out). The enzyme catalyses O-hexanoyl-(R)-carnitine(in) = O-hexanoyl-(R)-carnitine(out). It catalyses the reaction L-histidyl-L-proline diketopiperazine(in) = L-histidyl-L-proline diketopiperazine(out). It carries out the reaction (R)-salsolinol(in) = (R)-salsolinol(out). The catalysed reaction is prostaglandin F2alpha(out) = prostaglandin F2alpha(in). The enzyme catalyses prostaglandin E2(out) = prostaglandin E2(in). With respect to regulation, phosphorylation of the transporter leads to changes in its substrate affinity, resulting in a regulation of the transport activity. In contrast with rat ortholog, ASP uptake is inhibited by protein kinase A (PKA) and C (PKC) activation. ASP uptake is also endogenously activated by calmodulin, the calmodulin-dependent kinase II and LCK tyrosine kinase. Inhibited by cGMP, most likely through a cGMP-binding protein that interacts with OCT1. Its function is as follows. Electrogenic voltage-dependent transporter that mediates the transport of a variety of organic cations such as endogenous bioactive amines, cationic drugs and xenobiotics. Functions as a pH- and Na(+)-independent, bidirectional transporter. Cation cellular uptake or release is driven by the electrochemical potential (i.e. membrane potential and concentration gradient) and substrate selectivity. Hydrophobicity is a major requirement for recognition in polyvalent substrates and inhibitors. Primarily expressed in the basolateral membrane of hepatocytes and proximal tubules and involved in the uptake and disposition of cationic compounds from the blood by hepatic and renal clearance. Most likely functions as an uptake carrier in enterocytes contributing to the intestinal elimination of organic cations from the systemic circulation. Transports endogenous monoamines such as N-1-methylnicotinamide (NMN), guanidine, neurotransmitters dopamine, serotonin, noradrenaline, adrenaline and histamine, and quaternary ammonium compound such as choline. Also transports natural polyamines such as spermidine, agmatine and putrescine at low affinity, but relatively high turnover. Involved in the hepatic and intestinal uptake of the vitamin B1/thiamine, hence regulating hepatic lipid and energy metabolism. Contributes to the influx and efflux of fatty acid carriers carnitines and acylcarnitines across the basolateral membrane of hepatocytes, from the liver to the systemic circulation and inversely and may be involved in regulating the systemic availability of hepatic acylcarnitines. Also capable of transporting non-amine endogenous compounds such as prostaglandin E2 (PGE2) and prostaglandin F2-alpha (PGF2-alpha). May contribute to the transport of cationic compounds in testes across the blood-testis-barrier. Also mediates the uptake of xenobiotics tributylmethylammonium (TBuMA), quinidine, N-methyl-quinine (NMQ), N-methyl-quinidine (NMQD) N-(4,4-azo-n-pentyl)-quinuclidine (APQ), azidoprocainamide methoiodide (AMP), N-(4,4-azo-n-pentyl)-21-deoxyajmalinium (APDA) and 4-(4-(dimethylamino)styryl)-N-methylpyridinium (ASP). The sequence is that of Solute carrier family 22 member 1 (SLC22A1) from Bos taurus (Bovine).